Reading from the N-terminus, the 344-residue chain is Glycerol-3-phosphate dehydrogenase [NAD(P)+] (344 aa).

NADPH-binding residues include Trp-11, Arg-31, Arg-32, and Lys-105. Sn-glycerol 3-phosphate is bound by residues Lys-105, Gly-133, and Ser-135. Ala-137 provides a ligand contact to NADPH. Residues Lys-188, Asp-241, Ser-251, Arg-252, and Asn-253 each coordinate sn-glycerol 3-phosphate. Lys-188 (proton acceptor) is an active-site residue. Residue Arg-252 participates in NADPH binding. Glu-278 is an NADPH binding site.

This sequence belongs to the NAD-dependent glycerol-3-phosphate dehydrogenase family.

It is found in the cytoplasm. The enzyme catalyses sn-glycerol 3-phosphate + NAD(+) = dihydroxyacetone phosphate + NADH + H(+). The catalysed reaction is sn-glycerol 3-phosphate + NADP(+) = dihydroxyacetone phosphate + NADPH + H(+). It participates in membrane lipid metabolism; glycerophospholipid metabolism. Catalyzes the reduction of the glycolytic intermediate dihydroxyacetone phosphate (DHAP) to sn-glycerol 3-phosphate (G3P), the key precursor for phospholipid synthesis. In Acidithiobacillus ferrooxidans (strain ATCC 23270 / DSM 14882 / CIP 104768 / NCIMB 8455) (Ferrobacillus ferrooxidans (strain ATCC 23270)), this protein is Glycerol-3-phosphate dehydrogenase [NAD(P)+].